A 120-amino-acid polypeptide reads, in one-letter code: MFLLYEYDIFWTFLIISILIPILAFLISGILAPIRKGPEKLSSYESGIEPMGDAWLQFQIRYYMFALVFVVFDVETVFLYPWAMSFDVLGVSVFIEALIFVLILIVGSVYAWRKGALEWS.

Helical transmembrane passes span 14 to 34 (LIIS…LAPI), 64 to 84 (MFAL…PWAM), and 88 to 108 (VLGV…IVGS).

The protein belongs to the complex I subunit 3 family. In terms of assembly, NDH is composed of at least 16 different subunits, 5 of which are encoded in the nucleus.

Its subcellular location is the plastid. The protein resides in the chloroplast thylakoid membrane. The catalysed reaction is a plastoquinone + NADH + (n+1) H(+)(in) = a plastoquinol + NAD(+) + n H(+)(out). It carries out the reaction a plastoquinone + NADPH + (n+1) H(+)(in) = a plastoquinol + NADP(+) + n H(+)(out). NDH shuttles electrons from NAD(P)H:plastoquinone, via FMN and iron-sulfur (Fe-S) centers, to quinones in the photosynthetic chain and possibly in a chloroplast respiratory chain. The immediate electron acceptor for the enzyme in this species is believed to be plastoquinone. Couples the redox reaction to proton translocation, and thus conserves the redox energy in a proton gradient. The polypeptide is NAD(P)H-quinone oxidoreductase subunit 3, chloroplastic (Cicer arietinum (Chickpea)).